Consider the following 202-residue polypeptide: Guanylate kinase (202 aa).

Positions 18–200 (LKPVVVFGPS…AYKQLEAICL (183 aa)) constitute a Guanylate kinase-like domain. 25–32 (GPSGVGKS) is an ATP binding site.

The protein belongs to the guanylate kinase family.

The enzyme catalyses GMP + ATP = GDP + ADP. Functionally, essential for recycling GMP and indirectly, cGMP. This Schizosaccharomyces pombe (strain 972 / ATCC 24843) (Fission yeast) protein is Guanylate kinase.